Here is a 432-residue protein sequence, read N- to C-terminus: Glutamate-1-semialdehyde 2,1-aminomutase 1 (432 aa).

The residue at position 268 (Lys-268) is an N6-(pyridoxal phosphate)lysine.

This sequence belongs to the class-III pyridoxal-phosphate-dependent aminotransferase family. HemL subfamily. In terms of assembly, homodimer. Pyridoxal 5'-phosphate is required as a cofactor.

It localises to the cytoplasm. It catalyses the reaction (S)-4-amino-5-oxopentanoate = 5-aminolevulinate. The protein operates within porphyrin-containing compound metabolism; protoporphyrin-IX biosynthesis; 5-aminolevulinate from L-glutamyl-tRNA(Glu): step 2/2. This is Glutamate-1-semialdehyde 2,1-aminomutase 1 from Bacillus cereus (strain B4264).